A 179-amino-acid chain; its full sequence is Large ribosomal subunit protein uL6 (179 aa).

Belongs to the universal ribosomal protein uL6 family. Part of the 50S ribosomal subunit.

Functionally, this protein binds to the 23S rRNA, and is important in its secondary structure. It is located near the subunit interface in the base of the L7/L12 stalk, and near the tRNA binding site of the peptidyltransferase center. This Mycobacterium avium (strain 104) protein is Large ribosomal subunit protein uL6.